We begin with the raw amino-acid sequence, 266 residues long: Auxin-responsive protein IAA21 (266 aa).

The EAR-like (transcriptional repression) signature appears at 24-28 (LRLGL). The interval 27 to 50 (GLPGTAEEAESEGGGGGGTDAAPL) is disordered. The 103-residue stretch at 146–248 (CLYVKVSMDG…SCRRLRIMKG (103 aa)) folds into the PB1 domain.

The protein belongs to the Aux/IAA family. In terms of assembly, homodimers and heterodimers. In terms of tissue distribution, highly expressed in flowers. Expressed in roots and seedlings.

It is found in the nucleus. Its function is as follows. Aux/IAA proteins are short-lived transcriptional factors that function as repressors of early auxin response genes at low auxin concentrations. The protein is Auxin-responsive protein IAA21 (IAA21) of Oryza sativa subsp. japonica (Rice).